The sequence spans 247 residues: 14-3-3 protein gamma-A (247 aa).

Belongs to the 14-3-3 family. As to quaternary structure, homodimer, and heterodimer with other family members.

It localises to the cytoplasm. Its function is as follows. Adapter protein implicated in the regulation of a large spectrum of both general and specialized signaling pathways. Binds to a large number of partners, usually by recognition of a phosphoserine or phosphothreonine motif. Binding generally results in the modulation of the activity of the binding partner. The protein is 14-3-3 protein gamma-A (ywhag-a) of Xenopus laevis (African clawed frog).